Consider the following 356-residue polypeptide: MAAEGWIWRWGWGRRCLGRPGLLGPGPGPTTPLFLLLLLGSVTADITDGNSEHLKREHSLIKPYQGVGSSSMPLWDFQGSTMLTSQYVRLTPDERSKEGSIWNHQPCFLKDWEMHVHFKVHGTGKKNLHGDGIALWYTRDRLVPGPVFGSKDNFHGLAIFLDTYPNDETTERVFPYISVMVNNGSLSYDHSKDGRWTELAGCTADFRNRDHDTFLAVRYSRGRLTVMTDLEDKNEWKNCIDITGVRLPTGYYFGASAGTGDLSDNHDIISMKLFQLMVEHTPDEESIDWTKIEPSVNFLKSPKDNVDDPTGNFRSGPLTGWRVFLLLLCALLGIVVCAVVGAVVFQKRQERNKRFY.

The N-terminal stretch at 1-44 is a signal peptide; it reads MAAEGWIWRWGWGRRCLGRPGLLGPGPGPTTPLFLLLLLGSVTA. The Lumenal segment spans residues 45-322; that stretch reads DITDGNSEHL…FRSGPLTGWR (278 aa). One can recognise an L-type lectin-like domain in the interval 52–276; that stretch reads EHLKREHSLI…DIISMKLFQL (225 aa). 2 residues coordinate a carbohydrate: S96 and D131. Ca(2+) is bound by residues D162, Y164, and N166. 164-166 is a binding site for a carbohydrate; sequence YPN. N183 is a glycosylation site (N-linked (GlcNAc...) asparagine). H190 provides a ligand contact to a carbohydrate. D193 is a Ca(2+) binding site. Cysteines 202 and 239 form a disulfide. 260–262 serves as a coordination point for a carbohydrate; sequence GDL. The chain crosses the membrane as a helical span at residues 323-345; the sequence is VFLLLLCALLGIVVCAVVGAVVF. The Cytoplasmic portion of the chain corresponds to 346 to 356; the sequence is QKRQERNKRFY.

Ca(2+) is required as a cofactor. Ubiquitous.

It is found in the endoplasmic reticulum-Golgi intermediate compartment membrane. Its subcellular location is the golgi apparatus membrane. It localises to the endoplasmic reticulum membrane. In terms of biological role, plays a role as an intracellular lectin in the early secretory pathway. Interacts with N-acetyl-D-galactosamine and high-mannose type glycans and may also bind to O-linked glycans. Involved in the transport and sorting of glycoproteins carrying high mannose-type glycans. This chain is Vesicular integral-membrane protein VIP36 (LMAN2), found in Homo sapiens (Human).